The following is a 364-amino-acid chain: tRNA-specific 2-thiouridylase MnmA (364 aa).

ATP-binding positions include 12 to 19 and Met38; that span reads GISGGVDS. Residues 98–100 are interaction with target base in tRNA; the sequence is NPD. Cys103 acts as the Nucleophile in catalysis. Cys103 and Cys199 form a disulfide bridge. Position 127 (Gly127) interacts with ATP. The interval 149–151 is interaction with tRNA; the sequence is KEQ. The active-site Cysteine persulfide intermediate is Cys199. The segment at 311 to 312 is interaction with tRNA; the sequence is RY.

It belongs to the MnmA/TRMU family.

The protein localises to the cytoplasm. The enzyme catalyses S-sulfanyl-L-cysteinyl-[protein] + uridine(34) in tRNA + AH2 + ATP = 2-thiouridine(34) in tRNA + L-cysteinyl-[protein] + A + AMP + diphosphate + H(+). Functionally, catalyzes the 2-thiolation of uridine at the wobble position (U34) of tRNA, leading to the formation of s(2)U34. The protein is tRNA-specific 2-thiouridylase MnmA of Hahella chejuensis (strain KCTC 2396).